The sequence spans 205 residues: Proteasome subunit beta type-3 (205 aa).

The protein belongs to the peptidase T1B family. In terms of assembly, the 26S proteasome consists of a 20S proteasome core and two 19S regulatory subunits. The 20S proteasome core is composed of 28 subunits that are arranged in four stacked rings, resulting in a barrel-shaped structure. The two end rings are each formed by seven alpha subunits, and the two central rings are each formed by seven beta subunits. The catalytic chamber with the active sites is on the inside of the barrel.

The protein resides in the cytoplasm. Its subcellular location is the nucleus. Its function is as follows. Non-catalytic component of the proteasome, a multicatalytic proteinase complex which is characterized by its ability to cleave peptides with Arg, Phe, Tyr, Leu, and Glu adjacent to the leaving group at neutral or slightly basic pH. The proteasome has an ATP-dependent proteolytic activity. This chain is Proteasome subunit beta type-3, found in Drosophila melanogaster (Fruit fly).